Here is a 327-residue protein sequence, read N- to C-terminus: MALADSARGLPNGGGGGGGSGSSSSSAEPPLFPDIVELNVGGQVYVTRRCTVVSVPDSLLWRMFTQQQPQELARDSKGRFFLDRDGFFFRYILDYLRDLQLVLPDYFPERSRLQREAEYFELPELVRRLGAPQQPGPGPPPPHSRRGVHKEGSLGDELLPLGYAEPEPQEGASAGAPSPTLELASRSPSGGAAGPLLTPSQSLDGSRRSGYITIGYRGSYTIGRDAQADAKFRRVARITVCGKTSLAKEVFGDTLNESRDPDRPPERYTSRYYLKFNFLEQAFDKLSESGFHMVACSSTGTCAFASSTDQSEDKIWTSYTEYVFCRE.

The disordered stretch occupies residues 1–28 (MALADSARGLPNGGGGGGGSGSSSSSAE). A2 is subject to N-acetylalanine. Positions 11–21 (PNGGGGGGGSG) are enriched in gly residues. At Y119 the chain carries Phosphotyrosine. Residues 129-204 (LGAPQQPGPG…PLLTPSQSLD (76 aa)) are disordered. S153, S173, and S187 each carry phosphoserine. T198 is subject to Phosphothreonine. Residue S202 is modified to Phosphoserine.

Interacts as a tetramer with GABBR1 and GABBR2. As to expression, expressed in the brain, mainly in the hippocampus and cerebellum.

It is found in the presynaptic cell membrane. The protein localises to the postsynaptic cell membrane. Functionally, auxiliary subunit of GABA-B receptors that determine the pharmacology and kinetics of the receptor response. Increases agonist potency and markedly alter the G-protein signaling of the receptors by accelerating onset and promoting desensitization. This Mus musculus (Mouse) protein is BTB/POZ domain-containing protein KCTD12 (Kctd12).